A 397-amino-acid chain; its full sequence is 1-deoxy-D-xylulose 5-phosphate reductoisomerase (397 aa).

NADPH is bound by residues Thr12, Gly13, Ser14, Ile15, Gly38, Lys39, Asn40, and Asn126. 1-deoxy-D-xylulose 5-phosphate is bound at residue Lys127. Glu128 contributes to the NADPH binding site. Residue Asp152 coordinates Mn(2+). 4 residues coordinate 1-deoxy-D-xylulose 5-phosphate: Ser153, Glu154, Ser188, and His211. Position 154 (Glu154) interacts with Mn(2+). Gly217 is an NADPH binding site. Positions 224, 229, 230, and 233 each coordinate 1-deoxy-D-xylulose 5-phosphate. Mn(2+) is bound at residue Glu233.

The protein belongs to the DXR family. Mg(2+) serves as cofactor. It depends on Mn(2+) as a cofactor.

It carries out the reaction 2-C-methyl-D-erythritol 4-phosphate + NADP(+) = 1-deoxy-D-xylulose 5-phosphate + NADPH + H(+). It functions in the pathway isoprenoid biosynthesis; isopentenyl diphosphate biosynthesis via DXP pathway; isopentenyl diphosphate from 1-deoxy-D-xylulose 5-phosphate: step 1/6. Functionally, catalyzes the NADPH-dependent rearrangement and reduction of 1-deoxy-D-xylulose-5-phosphate (DXP) to 2-C-methyl-D-erythritol 4-phosphate (MEP). The sequence is that of 1-deoxy-D-xylulose 5-phosphate reductoisomerase from Haemophilus influenzae (strain PittEE).